The sequence spans 120 residues: Ribosome-binding factor A (120 aa).

The protein belongs to the RbfA family. As to quaternary structure, monomer. Binds 30S ribosomal subunits, but not 50S ribosomal subunits or 70S ribosomes.

It is found in the cytoplasm. One of several proteins that assist in the late maturation steps of the functional core of the 30S ribosomal subunit. Associates with free 30S ribosomal subunits (but not with 30S subunits that are part of 70S ribosomes or polysomes). Required for efficient processing of 16S rRNA. May interact with the 5'-terminal helix region of 16S rRNA. The sequence is that of Ribosome-binding factor A from Rickettsia peacockii (strain Rustic).